A 62-amino-acid chain; its full sequence is UPF0370 protein ESA_00777 (62 aa).

The helical transmembrane segment at 4–24 (LGKYWWVLVLVFLLGVLLNVI) threads the bilayer. The segment covering 36–51 (MDNRPELPPHRDFNDK) has biased composition (basic and acidic residues). A disordered region spans residues 36-62 (MDNRPELPPHRDFNDKWDDEDDWPKKK). The span at 52 to 62 (WDDEDDWPKKK) shows a compositional bias: acidic residues.

It belongs to the UPF0370 family.

The protein resides in the cell membrane. This Cronobacter sakazakii (strain ATCC BAA-894) (Enterobacter sakazakii) protein is UPF0370 protein ESA_00777.